The chain runs to 287 residues: Ventral anterior homeobox 1b (287 aa).

Residues 1–33 (MFEKTRDMDVRCNIEENGRISKPKDNKEIRESQ) are compositionally biased toward basic and acidic residues. Residues 1-55 (MFEKTRDMDVRCNIEENGRISKPKDNKEIRESQSKMPSTYPAPGSSEGCAKNKSS) are disordered. A DNA-binding region (homeobox) is located at residues 89 to 148 (PKRTRTSFTAEQLYRLEMEFQRCQYVVGRERTELARQLNLSETQVKVWFQNRRTKQKKDQ).

It belongs to the EMX homeobox family.

The protein localises to the nucleus. In terms of biological role, involved in ventral eye development. This is Ventral anterior homeobox 1b (vax1-b) from Xenopus laevis (African clawed frog).